A 338-amino-acid polypeptide reads, in one-letter code: Malate dehydrogenase, mitochondrial (338 aa).

Residues 1–24 (MLSALARPAGAALRRSFSTSAQNN) constitute a mitochondrion transit peptide. NAD(+) is bound by residues 31–37 (GASGGIG) and Asp-57. A glycan (O-linked (GalNAc...) serine) is linked at Ser-33. Lys-78 and Lys-91 each carry N6-acetyllysine; alternate. An N6-succinyllysine; alternate mark is found at Lys-78 and Lys-91. Substrate is bound by residues Arg-104 and Arg-110. NAD(+) is bound by residues Asn-117 and 140-142 (ISN). Asn-142 is a binding site for substrate. An N6-acetyllysine modification is found at Lys-165. The Proton relay role is filled by Asp-173. Residue Arg-176 participates in substrate binding. N6-acetyllysine; alternate is present on Lys-185. An N6-succinyllysine; alternate modification is found at Lys-185. His-200 acts as the Proton acceptor in catalysis. N6-succinyllysine is present on Lys-203. N6-acetyllysine; alternate occurs at positions 215 and 239. N6-succinyllysine; alternate is present on residues Lys-215 and Lys-239. Position 239 is an N6-malonyllysine; alternate (Lys-239). Ser-246 is modified (phosphoserine). Position 251 (Met-251) interacts with NAD(+). N6-succinyllysine is present on Lys-269. N6-acetyllysine; alternate is present on residues Lys-296, Lys-301, Lys-307, Lys-314, and Lys-324. N6-succinyllysine; alternate is present on residues Lys-296, Lys-301, Lys-307, Lys-314, and Lys-324. Lys-307 carries the N6-malonyllysine; alternate modification. Ser-326 carries the post-translational modification Phosphoserine. 3 positions are modified to N6-acetyllysine; alternate: Lys-328, Lys-329, and Lys-335. Lys-328 carries the post-translational modification N6-succinyllysine; alternate. Lys-329 bears the N6-malonyllysine; alternate mark. At Lys-335 the chain carries N6-succinyllysine; alternate.

This sequence belongs to the LDH/MDH superfamily. MDH type 1 family. As to quaternary structure, homodimer. In terms of processing, acetylation is enhanced after treatment either with trichostin A (TSA) or with nicotinamide (NAM) with the appearance of tri- and tetraacetylations. Glucose also increases acetylation. Ubiquitously expressed. Highly expressed in skeletal muscle and heart. Also expressed in liver, ileum, colon, kidney and adipose tissue, and at very low levels in lung, pancreas, stomach and spleen.

It is found in the mitochondrion matrix. The catalysed reaction is (S)-malate + NAD(+) = oxaloacetate + NADH + H(+). With respect to regulation, enzyme activity is enhanced by acetylation. The polypeptide is Malate dehydrogenase, mitochondrial (Felis catus (Cat)).